The primary structure comprises 155 residues: 6,7-dimethyl-8-ribityllumazine synthase (155 aa).

5-amino-6-(D-ribitylamino)uracil is bound by residues Phe-23, 57–59 (AFE), and 81–83 (AVI). (2S)-2-hydroxy-3-oxobutyl phosphate is bound at residue 86–87 (AT). Residue His-89 is the Proton donor of the active site. Residue Phe-114 coordinates 5-amino-6-(D-ribitylamino)uracil. Arg-128 contacts (2S)-2-hydroxy-3-oxobutyl phosphate.

The protein belongs to the DMRL synthase family.

The enzyme catalyses (2S)-2-hydroxy-3-oxobutyl phosphate + 5-amino-6-(D-ribitylamino)uracil = 6,7-dimethyl-8-(1-D-ribityl)lumazine + phosphate + 2 H2O + H(+). It functions in the pathway cofactor biosynthesis; riboflavin biosynthesis; riboflavin from 2-hydroxy-3-oxobutyl phosphate and 5-amino-6-(D-ribitylamino)uracil: step 1/2. In terms of biological role, catalyzes the formation of 6,7-dimethyl-8-ribityllumazine by condensation of 5-amino-6-(D-ribitylamino)uracil with 3,4-dihydroxy-2-butanone 4-phosphate. This is the penultimate step in the biosynthesis of riboflavin. The sequence is that of 6,7-dimethyl-8-ribityllumazine synthase from Geotalea uraniireducens (strain Rf4) (Geobacter uraniireducens).